A 348-amino-acid polypeptide reads, in one-letter code: Zinc transporter ZIP13 (348 aa).

Residues 1 to 45 lie on the Cytoplasmic side of the membrane; that stretch reads MMIQTAVAQAKTAPAGPGPWSIKDLVDLQYLDELMSIDNLDVWFC. A helical membrane pass occupies residues 46-66; that stretch reads SLVGSIAIGLSGIFPLLVIPI. Residues 67–83 lie on the Lumenal side of the membrane; that stretch reads EAGTALKTEAGCQKLKK. Residues 84–104 traverse the membrane as a helical segment; it reads LLSFAIGGLLGDVFLHLLPEA. At 105 to 118 the chain is on the cytoplasmic side; sequence WAYTSSPGGSHRHY. Residues 119-139 form a helical membrane-spanning segment; sequence CTQGLWVIGGLMSFLTLEKMF. Residues 140 to 219 lie on the Lumenal side of the membrane; that stretch reads PDEVGDPETK…CIDNFTHGLA (80 aa). Residues 144-192 are disordered; sequence GDPETKTSFQRTTSSSSDLSSQFSVSPQTNGICSNNNSDSKPKTDISPY. Positions 149 to 169 are enriched in low complexity; it reads KTSFQRTTSSSSDLSSQFSVS. Polar residues predominate over residues 170-182; the sequence is PQTNGICSNNNSD. A helical transmembrane segment spans residues 220-240; the sequence is VAGSFLVSRKVGFLTTFAILL. The short motif at 241-246 is the XEXPHE-motif element; that stretch reads HEIPHE. Residues 241–262 are Cytoplasmic-facing; that stretch reads HEIPHEVGDFAILLRAGFDRWK. Residues 263-283 traverse the membrane as a helical segment; it reads AARMQLSTALGGVLGACFALC. The Lumenal segment spans residues 284–294; that stretch reads SQSQHGAENAT. Residues 295-315 traverse the membrane as a helical segment; that stretch reads TWILPFTSGGFLYIALVNVVP. Topologically, residues 316 to 326 are cytoplasmic; it reads DLLEETNPRNS. A helical transmembrane segment spans residues 327–347; sequence LLQVLLLFSGIGVMALLSIAM. Position 348 (Asp-348) is a topological domain, lumenal.

Belongs to the ZIP transporter (TC 2.A.5) family. As to quaternary structure, homodimer.

It is found in the golgi apparatus membrane. Its subcellular location is the cytoplasmic vesicle membrane. The protein resides in the endoplasmic reticulum membrane. The enzyme catalyses Zn(2+)(in) = Zn(2+)(out). Functions as a zinc transporter transporting Zn(2+) from the Golgi apparatus to the cytosol and thus influences the zinc level at least in areas of the cytosol. This is Zinc transporter ZIP13 from Danio rerio (Zebrafish).